The sequence spans 452 residues: Prephenate dehydrogenase [NADP(+)] (452 aa).

14 to 43 serves as a coordination point for NADP(+); that stretch reads KVIGIIGLGDMGLLYANKFTDAGWGVICCD. The 284-residue stretch at 14–297 folds into the Prephenate/arogenate dehydrogenase domain; that stretch reads KVIGIIGLGD…GKHTGLLLLD (284 aa).

This sequence belongs to the prephenate/arogenate dehydrogenase family.

It catalyses the reaction prephenate + NADP(+) = 3-(4-hydroxyphenyl)pyruvate + CO2 + NADPH. The protein operates within amino-acid biosynthesis; L-tyrosine biosynthesis; (4-hydroxyphenyl)pyruvate from prephenate (NADP(+) route): step 1/1. This chain is Prephenate dehydrogenase [NADP(+)] (TYR1), found in Saccharomyces cerevisiae (strain ATCC 204508 / S288c) (Baker's yeast).